We begin with the raw amino-acid sequence, 177 residues long: ATP synthase subunit delta (177 aa).

Belongs to the ATPase delta chain family. As to quaternary structure, F-type ATPases have 2 components, F(1) - the catalytic core - and F(0) - the membrane proton channel. F(1) has five subunits: alpha(3), beta(3), gamma(1), delta(1), epsilon(1). F(0) has three main subunits: a(1), b(2) and c(10-14). The alpha and beta chains form an alternating ring which encloses part of the gamma chain. F(1) is attached to F(0) by a central stalk formed by the gamma and epsilon chains, while a peripheral stalk is formed by the delta and b chains.

It is found in the cell inner membrane. F(1)F(0) ATP synthase produces ATP from ADP in the presence of a proton or sodium gradient. F-type ATPases consist of two structural domains, F(1) containing the extramembraneous catalytic core and F(0) containing the membrane proton channel, linked together by a central stalk and a peripheral stalk. During catalysis, ATP synthesis in the catalytic domain of F(1) is coupled via a rotary mechanism of the central stalk subunits to proton translocation. In terms of biological role, this protein is part of the stalk that links CF(0) to CF(1). It either transmits conformational changes from CF(0) to CF(1) or is implicated in proton conduction. The polypeptide is ATP synthase subunit delta (Vibrio alginolyticus).